Here is a 125-residue protein sequence, read N- to C-terminus: MHKEEHEVAVLGPPPSTILPRSTVINIHSETSVPDHVVWSLFNTLFLNWCCLGFIAFAYSVKSRDRKMVGDVTGAQAYASTAKCLNIWALILGILMTIGFILLLVFGSVTVYHIMLQIIQEKRGY.

At 1-36 (MHKEEHEVAVLGPPPSTILPRSTVINIHSETSVPDH) the chain is on the cytoplasmic side. Residue serine 16 is modified to Phosphoserine. The segment at residues 37 to 57 (VVWSLFNTLFLNWCCLGFIAF) is an intramembrane region (helical). Residues cysteine 50, cysteine 51, and cysteine 84 are each lipidated (S-palmitoyl cysteine). The Cytoplasmic portion of the chain corresponds to 58–86 (AYSVKSRDRKMVGDVTGAQAYASTAKCLN). The interval 84 to 125 (CLNIWALILGILMTIGFILLLVFGSVTVYHIMLQIIQEKRGY) is interaction with CAV1. A helical transmembrane segment spans residues 87–107 (IWALILGILMTIGFILLLVFG). Residues 108–125 (SVTVYHIMLQIIQEKRGY) lie on the Extracellular side of the membrane.

It belongs to the CD225/Dispanin family. As to quaternary structure, interacts with CD81. Part of a complex composed of CD19, CR2/CD21, CD81 and IFITM1/CD225 in the membrane of mature B-cells. Interacts with CAV1; this interaction enhances the ability of CAV1 in inhibiting ERK activation. Palmitoylation on membrane-proximal cysteines controls clustering in membrane compartments and antiviral activity. As to expression, bone (at protein level). Levels greatly elevated in colon cancer, cervical cancer, esophageal cancer and ovarian cancer. Expressed in glioma cell lines.

The protein resides in the cell membrane. Its subcellular location is the lysosome membrane. In terms of biological role, IFN-induced antiviral protein which inhibits the entry of viruses to the host cell cytoplasm, permitting endocytosis, but preventing subsequent viral fusion and release of viral contents into the cytosol. Active against multiple viruses, including influenza A virus, SARS coronaviruses (SARS-CoV and SARS-CoV-2), Marburg virus (MARV), Ebola virus (EBOV), Dengue virus (DNV), West Nile virus (WNV), human immunodeficiency virus type 1 (HIV-1) and hepatitis C virus (HCV). Can inhibit: influenza virus hemagglutinin protein-mediated viral entry, MARV and EBOV GP1,2-mediated viral entry and SARS-CoV and SARS-CoV-2 S protein-mediated viral entry. Also implicated in cell adhesion and control of cell growth and migration. Inhibits SARS-CoV-2 S protein-mediated syncytia formation. Plays a key role in the antiproliferative action of IFN-gamma either by inhibiting the ERK activation or by arresting cell growth in G1 phase in a p53-dependent manner. Acts as a positive regulator of osteoblast differentiation. In hepatocytes, IFITM proteins act in a coordinated manner to restrict HCV infection by targeting the endocytosed HCV virion for lysosomal degradation. IFITM2 and IFITM3 display anti-HCV activity that may complement the anti-HCV activity of IFITM1 by inhibiting the late stages of HCV entry, possibly in a coordinated manner by trapping the virion in the endosomal pathway and targeting it for degradation at the lysosome. The chain is Interferon-induced transmembrane protein 1 from Homo sapiens (Human).